A 320-amino-acid chain; its full sequence is Cytochrome f (320 aa).

The signal sequence occupies residues 1–35 (MQMRNTFSWIKEEIIRFIAVSLIIYIITRAPISNA). Residues Y36, C56, C59, and H60 each coordinate heme. Residues 286–306 (VQGLLLFLASIILAQIFLVLK) form a helical membrane-spanning segment.

This sequence belongs to the cytochrome f family. As to quaternary structure, the 4 large subunits of the cytochrome b6-f complex are cytochrome b6, subunit IV (17 kDa polypeptide, petD), cytochrome f and the Rieske protein, while the 4 small subunits are PetG, PetL, PetM and PetN. The complex functions as a dimer. Requires heme as cofactor.

The protein resides in the plastid. It localises to the chloroplast thylakoid membrane. Its function is as follows. Component of the cytochrome b6-f complex, which mediates electron transfer between photosystem II (PSII) and photosystem I (PSI), cyclic electron flow around PSI, and state transitions. The protein is Cytochrome f of Morus indica (Mulberry).